Consider the following 152-residue polypeptide: Transcriptional repressor NrdR (152 aa).

Residues 3–34 (CPHCHHNGSRVIDSRPAEDGMSIRRRRECVNC) fold into a zinc finger. One can recognise an ATP-cone domain in the interval 49-139 (LLVVKKDGTR…VYRQFKDVDA (91 aa)).

The protein belongs to the NrdR family. It depends on Zn(2+) as a cofactor.

Functionally, negatively regulates transcription of bacterial ribonucleotide reductase nrd genes and operons by binding to NrdR-boxes. In Limosilactobacillus fermentum (strain NBRC 3956 / LMG 18251) (Lactobacillus fermentum), this protein is Transcriptional repressor NrdR.